The primary structure comprises 41 residues: Submaxillary gland androgen-regulated protein 2, isoform beta (41 aa).

Residues 1 to 22 (MKALYMVFVLWVLIGCFLRLLK) form the signal peptide.

The protein resides in the secreted. Functionally, may play a role in protection or detoxification. In Mus musculus (Mouse), this protein is Submaxillary gland androgen-regulated protein 2, isoform beta (Smr2).